The following is a 511-amino-acid chain: GMP synthase [glutamine-hydrolyzing] (511 aa).

The 196-residue stretch at 3 to 198 folds into the Glutamine amidotransferase type-1 domain; sequence SVLVLDFGSQ…LLNIAAITPD (196 aa). Catalysis depends on cysteine 80, which acts as the Nucleophile. Active-site residues include histidine 172 and glutamate 174. Positions 199-386 constitute a GMPS ATP-PPase domain; sequence WSSKSFIEHQ…LGIPEDILMR (188 aa). 226–232 serves as a coordination point for ATP; that stretch reads SGGVDST.

In terms of assembly, homodimer.

It catalyses the reaction XMP + L-glutamine + ATP + H2O = GMP + L-glutamate + AMP + diphosphate + 2 H(+). Its pathway is purine metabolism; GMP biosynthesis; GMP from XMP (L-Gln route): step 1/1. In terms of biological role, catalyzes the synthesis of GMP from XMP. This chain is GMP synthase [glutamine-hydrolyzing], found in Chlorobium chlorochromatii (strain CaD3).